The chain runs to 179 residues: Large ribosomal subunit protein uL10 (179 aa).

This sequence belongs to the universal ribosomal protein uL10 family. As to quaternary structure, part of the ribosomal stalk of the 50S ribosomal subunit. The N-terminus interacts with L11 and the large rRNA to form the base of the stalk. The C-terminus forms an elongated spine to which L12 dimers bind in a sequential fashion forming a multimeric L10(L12)X complex.

Functionally, forms part of the ribosomal stalk, playing a central role in the interaction of the ribosome with GTP-bound translation factors. The protein is Large ribosomal subunit protein uL10 of Polynucleobacter necessarius subsp. necessarius (strain STIR1).